Reading from the N-terminus, the 356-residue chain is UDP-N-acetylglucosamine--N-acetylmuramyl-(pentapeptide) pyrophosphoryl-undecaprenol N-acetylglucosamine transferase (356 aa).

UDP-N-acetyl-alpha-D-glucosamine is bound by residues 12-14, N120, R163, S187, and Q286; that span reads SGG.

It belongs to the glycosyltransferase 28 family. MurG subfamily.

The protein localises to the cell inner membrane. The enzyme catalyses di-trans,octa-cis-undecaprenyl diphospho-N-acetyl-alpha-D-muramoyl-L-alanyl-D-glutamyl-meso-2,6-diaminopimeloyl-D-alanyl-D-alanine + UDP-N-acetyl-alpha-D-glucosamine = di-trans,octa-cis-undecaprenyl diphospho-[N-acetyl-alpha-D-glucosaminyl-(1-&gt;4)]-N-acetyl-alpha-D-muramoyl-L-alanyl-D-glutamyl-meso-2,6-diaminopimeloyl-D-alanyl-D-alanine + UDP + H(+). Its pathway is cell wall biogenesis; peptidoglycan biosynthesis. Its function is as follows. Cell wall formation. Catalyzes the transfer of a GlcNAc subunit on undecaprenyl-pyrophosphoryl-MurNAc-pentapeptide (lipid intermediate I) to form undecaprenyl-pyrophosphoryl-MurNAc-(pentapeptide)GlcNAc (lipid intermediate II). This Pelagibacter ubique (strain HTCC1062) protein is UDP-N-acetylglucosamine--N-acetylmuramyl-(pentapeptide) pyrophosphoryl-undecaprenol N-acetylglucosamine transferase.